We begin with the raw amino-acid sequence, 440 residues long: Deoxyguanosinetriphosphate triphosphohydrolase-like protein (440 aa).

The region spanning 62 to 255 (RLTHSLEAAQ…MELADDIAYG (194 aa)) is the HD domain.

Belongs to the dGTPase family. Type 2 subfamily.

The polypeptide is Deoxyguanosinetriphosphate triphosphohydrolase-like protein (Vibrio parahaemolyticus serotype O3:K6 (strain RIMD 2210633)).